A 337-amino-acid polypeptide reads, in one-letter code: Palmitoyltransferase ZDHHC15 (337 aa).

Topologically, residues 1-20 are cytoplasmic; it reads MRRGWKMALSGGLRCCRRVL. A helical transmembrane segment spans residues 21–41; sequence SWVPVLVIVLVVLWSYYAYVF. Over 42-56 the chain is Lumenal; it reads ELCLVTVLSPAEKVI. A helical membrane pass occupies residues 57 to 77; that stretch reads YLILYHAIFVFFAWTYWKSIF. The Cytoplasmic portion of the chain corresponds to 78–172; it reads TLPQQPNQKF…NNCIGFSNYK (95 aa). Residues 129-179 enclose the DHHC domain; it reads RFCDRCHLIKPDRCHHCSVCAMCVLKMDHHCPWVNNCIGFSNYKFFLQFLA. The Zn(2+) site is built by Cys-131, Cys-134, His-144, Cys-145, Cys-148, Cys-151, and His-158. Catalysis depends on Cys-159, which acts as the S-palmitoyl cysteine intermediate. Residue Cys-165 coordinates Zn(2+). The chain crosses the membrane as a helical span at residues 173–193; that stretch reads FFLQFLAYSVLYCLYIATTVF. The Lumenal portion of the chain corresponds to 194–210; that stretch reads SYFIKYWRGELPSVRSK. A helical membrane pass occupies residues 211-234; sequence FHVLFLLFVACMFFVSLVILFGYH. Over 235 to 337 the chain is Cytoplasmic; sequence CWLVSRNKTT…LSSLAVESET (103 aa). The disordered stretch occupies residues 293 to 337; sequence HSFPMRSMNESQNPLLANEEPWEDNEDESQDYPEGLSSLAVESET. The segment covering 312–323 has biased composition (acidic residues); that stretch reads EPWEDNEDESQD.

The protein belongs to the DHHC palmitoyltransferase family. In terms of processing, autopalmitoylated (in vitro). In terms of tissue distribution, in brain, expressed in both excitatory and inhibitory neurons but not expressed by glial cells.

Its subcellular location is the golgi apparatus membrane. It localises to the postsynaptic density. The catalysed reaction is L-cysteinyl-[protein] + hexadecanoyl-CoA = S-hexadecanoyl-L-cysteinyl-[protein] + CoA. The enzyme catalyses L-cysteinyl-[protein] + tetradecanoyl-CoA = S-tetradecanoyl-L-cysteinyl-[protein] + CoA. It carries out the reaction L-cysteinyl-[protein] + octadecanoyl-CoA = S-octadecanoyl-L-cysteinyl-[protein] + CoA. Its function is as follows. Palmitoyltransferase that catalyzes the addition of palmitate onto various protein substrates. Has no stringent fatty acid selectivity and in addition to palmitate can also transfer onto target proteins myristate from tetradecanoyl-CoA and stearate from octadecanoyl-CoA. Palmitoylates IGF2R and SORT1, promoting their partitioning to an endosomal membrane subdomain where they can interact with the retromer cargo-selective complex. Thereby, regulates retrograde transport from endosomes to the Golgi apparatus of these lysosomal sorting receptors and plays a role in trafficking of lysosomal proteins. In the nervous system, catalyzes the palmitoylation of DLG4/PSD95 and regulates its synaptic clustering and function in synaptogenesis. Could be involved in the differentiation of dopaminergic neurons and the development of the diencephalon. Could also catalyze the palmitoylation of GAP43. Could also palmitoylate DNAJC5 and regulate its localization to the Golgi membrane. Could also palmitoylate FYN as shown in vitro. May palmitoylate CALHM3 subunit of gustatory voltage-gated ion channels and modulate channel gating and kinetics. In Rattus norvegicus (Rat), this protein is Palmitoyltransferase ZDHHC15.